A 259-amino-acid chain; its full sequence is tRNA-cytidine(32) 2-sulfurtransferase (259 aa).

The PP-loop motif motif lies at 37 to 42 (SGGKDS). C112, C115, and C202 together coordinate [4Fe-4S] cluster.

Belongs to the TtcA family. Homodimer. Requires Mg(2+) as cofactor. The cofactor is [4Fe-4S] cluster.

The protein localises to the cytoplasm. The catalysed reaction is cytidine(32) in tRNA + S-sulfanyl-L-cysteinyl-[cysteine desulfurase] + AH2 + ATP = 2-thiocytidine(32) in tRNA + L-cysteinyl-[cysteine desulfurase] + A + AMP + diphosphate + H(+). It participates in tRNA modification. In terms of biological role, catalyzes the ATP-dependent 2-thiolation of cytidine in position 32 of tRNA, to form 2-thiocytidine (s(2)C32). The sulfur atoms are provided by the cysteine/cysteine desulfurase (IscS) system. This is tRNA-cytidine(32) 2-sulfurtransferase from Syntrophotalea carbinolica (strain DSM 2380 / NBRC 103641 / GraBd1) (Pelobacter carbinolicus).